The primary structure comprises 122 residues: Large ribosomal subunit protein uL14 (122 aa).

The protein belongs to the universal ribosomal protein uL14 family. In terms of assembly, part of the 50S ribosomal subunit. Forms a cluster with proteins L3 and L19. In the 70S ribosome, L14 and L19 interact and together make contacts with the 16S rRNA in bridges B5 and B8.

In terms of biological role, binds to 23S rRNA. Forms part of two intersubunit bridges in the 70S ribosome. In Beutenbergia cavernae (strain ATCC BAA-8 / DSM 12333 / CCUG 43141 / JCM 11478 / NBRC 16432 / NCIMB 13614 / HKI 0122), this protein is Large ribosomal subunit protein uL14.